The sequence spans 222 residues: UPF0173 metal-dependent hydrolase Mboo_0816 (222 aa).

Belongs to the UPF0173 family.

The polypeptide is UPF0173 metal-dependent hydrolase Mboo_0816 (Methanoregula boonei (strain DSM 21154 / JCM 14090 / 6A8)).